A 214-amino-acid polypeptide reads, in one-letter code: Probable nicotinate-nucleotide adenylyltransferase (214 aa).

This sequence belongs to the NadD family.

The enzyme catalyses nicotinate beta-D-ribonucleotide + ATP + H(+) = deamido-NAD(+) + diphosphate. The protein operates within cofactor biosynthesis; NAD(+) biosynthesis; deamido-NAD(+) from nicotinate D-ribonucleotide: step 1/1. Functionally, catalyzes the reversible adenylation of nicotinate mononucleotide (NaMN) to nicotinic acid adenine dinucleotide (NaAD). The polypeptide is Probable nicotinate-nucleotide adenylyltransferase (Pseudomonas paraeruginosa (strain DSM 24068 / PA7) (Pseudomonas aeruginosa (strain PA7))).